The following is a 275-amino-acid chain: MAGLGKPYTGHPGDAFEGLVQRIRLIVPSTLRGGDGEAGPYSPSSLPSRCAFQFHGHDGSDESFPIEYVLRLMNDWAEVPCNPYLRIQNTGVSVLFQGFFHRPHNAPGGAITPERTNVILGSTETTGLSLGDLDTIKGRLGLDARPMMASMWISCFVRMPRVQLAFRFMGPEDAGRTRRILCRAAEQAITRRRRTRRSREAYGAEAGLGVAGTGFRARGDGFGPLPLLTQGPSRPWHQALRGLKHLRIGPPALVLAAGLVLGAAIWWVVGAGARL.

Over 1 to 251 (MAGLGKPYTG…GLKHLRIGPP (251 aa)) the chain is Perinuclear space. Residues 137–181 (KGRLGLDARPMMASMWISCFVRMPRVQLAFRFMGPEDAGRTRRIL) form an interaction with NEC1 region. The chain crosses the membrane as a helical span at residues 252-272 (ALVLAAGLVLGAAIWWVVGAG). The Nuclear segment spans residues 273 to 275 (ARL).

It belongs to the herpesviridae NEC2 protein family. As to quaternary structure, forms a heterohexameric complex with NEC1. Interacts with glycoprotein D; this interaction recruits glycoprotein D and glycoprotein M to the inner nuclear membrane. Post-translationally, phosphorylated by viral kinase US3.

Its subcellular location is the host nucleus inner membrane. In terms of biological role, plays an essential role in virion nuclear egress, the first step of virion release from infected cell. Within the host nucleus, NEC1 interacts with the newly formed capsid through the vertexes and directs it to the inner nuclear membrane by associating with NEC2. Induces the budding of the capsid at the inner nuclear membrane as well as its envelopment into the perinuclear space. There, the NEC1/NEC2 complex promotes the fusion of the enveloped capsid with the outer nuclear membrane and the subsequent release of the viral capsid into the cytoplasm where it will reach the secondary budding sites in the host Golgi or trans-Golgi network. The protein is Nuclear egress protein 2 of Homo sapiens (Human).